A 481-amino-acid polypeptide reads, in one-letter code: Protein nucleotidyltransferase YdiU (481 aa).

The ATP site is built by Gly85, Gly87, Arg88, Lys108, Asp120, Gly121, Arg172, and Arg179. The active-site Proton acceptor is Asp248. Mg(2+)-binding residues include Asn249 and Asp258. Asp258 contacts ATP.

The protein belongs to the SELO family. Mg(2+) serves as cofactor. The cofactor is Mn(2+).

It catalyses the reaction L-seryl-[protein] + ATP = 3-O-(5'-adenylyl)-L-seryl-[protein] + diphosphate. The enzyme catalyses L-threonyl-[protein] + ATP = 3-O-(5'-adenylyl)-L-threonyl-[protein] + diphosphate. It carries out the reaction L-tyrosyl-[protein] + ATP = O-(5'-adenylyl)-L-tyrosyl-[protein] + diphosphate. The catalysed reaction is L-histidyl-[protein] + UTP = N(tele)-(5'-uridylyl)-L-histidyl-[protein] + diphosphate. It catalyses the reaction L-seryl-[protein] + UTP = O-(5'-uridylyl)-L-seryl-[protein] + diphosphate. The enzyme catalyses L-tyrosyl-[protein] + UTP = O-(5'-uridylyl)-L-tyrosyl-[protein] + diphosphate. Nucleotidyltransferase involved in the post-translational modification of proteins. It can catalyze the addition of adenosine monophosphate (AMP) or uridine monophosphate (UMP) to a protein, resulting in modifications known as AMPylation and UMPylation. This Cereibacter sphaeroides (strain KD131 / KCTC 12085) (Rhodobacter sphaeroides) protein is Protein nucleotidyltransferase YdiU.